A 409-amino-acid chain; its full sequence is Exonuclease V (409 aa).

C86 contacts [4Fe-4S] cluster. Mg(2+)-binding residues include D176 and D207. Positions 386, 389, and 395 each coordinate [4Fe-4S] cluster.

This sequence belongs to the EXO5 family. In terms of assembly, monomer. Mg(2+) is required as a cofactor. It depends on [4Fe-4S] cluster as a cofactor.

It is found in the cytoplasm. Its subcellular location is the nucleus. The protein resides in the mitochondrion. Its function is as follows. Single-stranded DNA (ssDNA) bidirectional exonuclease involved in DNA repair. Probably involved in DNA repair following ultraviolet (UV) irradiation and interstrand cross-links (ICLs) damage. Has both 5'-3' and 3'-5' exonuclease activities with a strong preference for 5'-ends. Acts as a sliding exonuclease that loads at ssDNA ends and then slides along the ssDNA prior to cutting; however the sliding and the 3'-5' exonuclease activities are abolished upon binding to the replication protein A (RPA) complex that enforces 5'-directionality activity. Plays a redundant role with the flap endonuclease FEN1/rad2 for the maintenance of mitochondrial DNA. This Schizosaccharomyces pombe (strain 972 / ATCC 24843) (Fission yeast) protein is Exonuclease V (exo5).